We begin with the raw amino-acid sequence, 82 residues long: Small ribosomal subunit protein bS16 (82 aa).

It belongs to the bacterial ribosomal protein bS16 family.

The sequence is that of Small ribosomal subunit protein bS16 from Aliivibrio fischeri (strain ATCC 700601 / ES114) (Vibrio fischeri).